The sequence spans 501 residues: Group 3 secretory phospholipase A2 (501 aa).

The signal sequence occupies residues 1-19; that stretch reads MGVLVVLLGVLSFLGRTLG. Residues 119–139 are disordered; it reads RGPAESPAGTREKRAAGQNGV. The tract at residues 150 to 291 is phospholipase A2-like; it reads GWTVPGTLWC…SWSSPATSLT (142 aa). Residues tryptophan 158, glycine 160, and glycine 162 each contribute to the Ca(2+) site. 4 disulfides stabilise this stretch: cysteine 159–cysteine 181, cysteine 180–cysteine 220, cysteine 187–cysteine 213, and cysteine 211–cysteine 244. Asparagine 167 carries an N-linked (GlcNAc...) asparagine glycan. The active site involves histidine 184. Aspartate 185 lines the Ca(2+) pocket. Aspartate 214 is an active-site residue. N-linked (GlcNAc...) asparagine glycosylation is present at asparagine 280. A compositionally biased stretch (polar residues) spans 284 to 298; that stretch reads SSPATSLTPSPQNPA. The interval 284–339 is disordered; it reads SSPATSLTPSPQNPALSRPQPMQHPQQWPSEWKESKSPSKTNATALQAPVASPGSD. Residues asparagine 325 and asparagine 403 are each glycosylated (N-linked (GlcNAc...) asparagine).

The protein belongs to the phospholipase A2 family. Ca(2+) serves as cofactor. In terms of processing, N-glycosylation does not affect the catalytic activity, but is required for proper secretion. A nonglycosylated form was observed in several cell types. In several cell types, the N- and C-termini are cleaved off.

The protein localises to the secreted. Its subcellular location is the cell membrane. It is found in the cytoplasm. The protein resides in the cytoskeleton. It localises to the microtubule organizing center. The protein localises to the centrosome. Its subcellular location is the centriole. It is found in the recycling endosome. It catalyses the reaction a 1,2-diacyl-sn-glycero-3-phosphocholine + H2O = a 1-acyl-sn-glycero-3-phosphocholine + a fatty acid + H(+). The catalysed reaction is 1-hexadecanoyl-2-(9Z,12Z-octadecadienoyl)-sn-glycero-3-phosphocholine + H2O = (9Z,12Z)-octadecadienoate + 1-hexadecanoyl-sn-glycero-3-phosphocholine + H(+). The enzyme catalyses 1-hexadecanoyl-2-(5Z,8Z,11Z,14Z-eicosatetraenoyl)-sn-glycero-3-phosphocholine + H2O = 1-hexadecanoyl-sn-glycero-3-phosphocholine + (5Z,8Z,11Z,14Z)-eicosatetraenoate + H(+). It carries out the reaction 1-hexadecanoyl-2-(9Z,12Z-octadecadienoyl)-sn-glycero-3-phosphoethanolamine + H2O = 1-hexadecanoyl-sn-glycero-3-phosphoethanolamine + (9Z,12Z)-octadecadienoate + H(+). It catalyses the reaction 1-hexadecanoyl-2-(5Z,8Z,11Z,14Z-eicosatetraenoyl)-sn-glycero-3-phosphoethanolamine + H2O = 1-hexadecanoyl-sn-glycero-3-phosphoethanolamine + (5Z,8Z,11Z,14Z)-eicosatetraenoate + H(+). In terms of biological role, secretory calcium-dependent phospholipase A2 that primarily targets extracellular phospholipids. Hydrolyzes the ester bond of the fatty acyl group attached at sn-2 position of phospholipids without apparent head group selectivity. Contributes to phospholipid remodeling of low-density lipoprotein (LDL) and high-density lipoprotein (HDL) particles. Hydrolyzes LDL phospholipids releasing unsaturated fatty acids that regulate macrophage differentiation toward foam cells. May act in an autocrine and paracrine manner. Secreted by immature mast cells, acts on nearby fibroblasts upstream to PTDGS to synthesize prostaglandin D2 (PGD2), which in turn promotes mast cell maturation and degranulation via PTGDR. Secreted by epididymal epithelium, acts on immature sperm cells within the duct, modulating the degree of unsaturation of the fatty acyl components of phosphatidylcholines required for acrosome assembly and sperm cell motility. Facilitates the replacement of fatty acyl chains in phosphatidylcholines in sperm membranes from omega-6 and omega-9 to omega-3 polyunsaturated fatty acids (PUFAs). Coupled to lipoxygenase pathway, may process omega-6 PUFAs to generate oxygenated lipid mediators in the male reproductive tract. At pericentrosomal preciliary compartment, negatively regulates ciliogenesis likely by regulating endocytotic recycling of ciliary membrane protein. Coupled to cyclooxygenase pathway provides arachidonate to generate prostaglandin E2 (PGE2), a potent immunomodulatory lipid in inflammation and tumorigenesis. At colonic epithelial barrier, preferentially hydrolyzes phospholipids having arachidonate and docosahexaenoate at sn-2 position, contributing to the generation of oxygenated metabolites involved in colonic stem cell homeostasis. Releases C16:0 and C18:0 lysophosphatidylcholine subclasses from neuron plasma membranes and promotes neurite outgrowth and neuron survival. This is Group 3 secretory phospholipase A2 (PLA2G3) from Bos taurus (Bovine).